The following is a 270-amino-acid chain: MSQKKSPRFELRSGNVDALLLALQTADMAALRDDLLARFEATPDFFSNDVIALDLRALEDDSEVALGTVIETLATLRARAIGVVARPGQREWAERFGLPLLDSQARRGSGADRATDRAAEARAAAAAEQAAADQAAREESIRAAAQATTDAAVAAAIRQTQTMLIDKPLRSGQQVYAQGDVVILDVVSYGAEVIAEGNIHIYAPLRGRALAGVKGNTGARIFSTCMEPELISIAGIYRTAEQTLPADVLGKTAQVRLADEKLILEALRLK.

Belongs to the MinC family. Interacts with MinD and FtsZ.

Cell division inhibitor that blocks the formation of polar Z ring septums. Rapidly oscillates between the poles of the cell to destabilize FtsZ filaments that have formed before they mature into polar Z rings. Prevents FtsZ polymerization. The chain is Probable septum site-determining protein MinC from Cupriavidus necator (strain ATCC 17699 / DSM 428 / KCTC 22496 / NCIMB 10442 / H16 / Stanier 337) (Ralstonia eutropha).